A 244-amino-acid polypeptide reads, in one-letter code: Uridylate kinase (244 aa).

16–19 is an ATP binding site; that stretch reads KLSG. G58 contacts UMP. Positions 59 and 63 each coordinate ATP. UMP contacts are provided by residues D78 and 139–146; that span reads VGAPYFTT. The ATP site is built by T166, Y172, and D175.

This sequence belongs to the UMP kinase family. Homohexamer.

The protein resides in the cytoplasm. The catalysed reaction is UMP + ATP = UDP + ADP. It functions in the pathway pyrimidine metabolism; CTP biosynthesis via de novo pathway; UDP from UMP (UMPK route): step 1/1. Inhibited by UTP. Functionally, catalyzes the reversible phosphorylation of UMP to UDP. The polypeptide is Uridylate kinase (Novosphingobium aromaticivorans (strain ATCC 700278 / DSM 12444 / CCUG 56034 / CIP 105152 / NBRC 16084 / F199)).